The sequence spans 271 residues: Eukaryotic translation initiation factor 3 subunit G (271 aa).

Disordered stretches follow at residues 1-29 (MPAL…SEVI) and 143-185 (KPTK…MRGR). One can recognise an RRM domain in the interval 189–267 (SAIRISNLSE…LILSVEWSKP (79 aa)).

Belongs to the eIF-3 subunit G family. Component of the eukaryotic translation initiation factor 3 (eIF-3) complex.

The protein resides in the cytoplasm. RNA-binding component of the eukaryotic translation initiation factor 3 (eIF-3) complex, which is involved in protein synthesis of a specialized repertoire of mRNAs and, together with other initiation factors, stimulates binding of mRNA and methionyl-tRNAi to the 40S ribosome. The eIF-3 complex specifically targets and initiates translation of a subset of mRNAs involved in cell proliferation. This subunit can bind 18S rRNA. This chain is Eukaryotic translation initiation factor 3 subunit G, found in Anopheles gambiae (African malaria mosquito).